We begin with the raw amino-acid sequence, 278 residues long: ABC transporter I family member 11, chloroplastic (278 aa).

Residues 1-49 (MAVSTFSSPTPVFGIAEPPASFSSTAIGWKQPLRFRRTKKPRVISCDYS) constitute a chloroplast transit peptide. The 228-residue stretch at 51–278 (IEVRDVCYRP…GVLVAERPPL (228 aa)) folds into the ABC transporter domain. An ATP-binding site is contributed by 85 to 92 (GKSGSGKT).

It belongs to the ABC transporter superfamily. ABCI family.

The protein localises to the plastid. Its subcellular location is the chloroplast. The chain is ABC transporter I family member 11, chloroplastic (ABCI11) from Arabidopsis thaliana (Mouse-ear cress).